Here is a 339-residue protein sequence, read N- to C-terminus: Photosystem II assembly lipoprotein Ycf48 (339 aa).

The signal sequence occupies residues 1-22; that stretch reads MVIVKSWQKIFALLVVLLLCIG. Cys23 is lipidated: N-palmitoyl cysteine. Residue Cys23 is the site of S-diacylglycerol cysteine attachment.

The protein belongs to the Ycf48 family. Part of early PSII assembly complexes which includes D1 (psbA) and PsbI; not found in mature PSII. Binds to the lumenal side of PSII complexes. Interacts with YidC.

It is found in the cellular thylakoid membrane. Functionally, a factor required for optimal assembly of photosystem II (PSII), acting in the early stages of PSII assembly. Also plays a role in replacement of photodamaged D1 (psbA). Assists YidC in synthesis of chlorophyll-binding proteins. The polypeptide is Photosystem II assembly lipoprotein Ycf48 (Trichormus variabilis (strain ATCC 29413 / PCC 7937) (Anabaena variabilis)).